Reading from the N-terminus, the 280-residue chain is 2-dehydro-3-deoxyphosphooctonate aldolase 2 (280 aa).

This sequence belongs to the KdsA family.

It localises to the cytoplasm. It catalyses the reaction D-arabinose 5-phosphate + phosphoenolpyruvate + H2O = 3-deoxy-alpha-D-manno-2-octulosonate-8-phosphate + phosphate. Its pathway is carbohydrate biosynthesis; 3-deoxy-D-manno-octulosonate biosynthesis; 3-deoxy-D-manno-octulosonate from D-ribulose 5-phosphate: step 2/3. It participates in bacterial outer membrane biogenesis; lipopolysaccharide biosynthesis. This Pseudomonas putida (strain ATCC 47054 / DSM 6125 / CFBP 8728 / NCIMB 11950 / KT2440) protein is 2-dehydro-3-deoxyphosphooctonate aldolase 2 (kdsA2).